Reading from the N-terminus, the 143-residue chain is Large ribosomal subunit protein uL13 (143 aa).

This sequence belongs to the universal ribosomal protein uL13 family. Part of the 50S ribosomal subunit.

In terms of biological role, this protein is one of the early assembly proteins of the 50S ribosomal subunit, although it is not seen to bind rRNA by itself. It is important during the early stages of 50S assembly. In Neisseria gonorrhoeae (strain ATCC 700825 / FA 1090), this protein is Large ribosomal subunit protein uL13.